A 120-amino-acid polypeptide reads, in one-letter code: Chaperonin GroEL (120 aa).

23–27 (DGTTT) contacts ATP.

It belongs to the chaperonin (HSP60) family. Forms a cylinder of 14 subunits composed of two heptameric rings stacked back-to-back. Interacts with the co-chaperonin GroES.

Its subcellular location is the cytoplasm. The catalysed reaction is ATP + H2O + a folded polypeptide = ADP + phosphate + an unfolded polypeptide.. Together with its co-chaperonin GroES, plays an essential role in assisting protein folding. The GroEL-GroES system forms a nano-cage that allows encapsulation of the non-native substrate proteins and provides a physical environment optimized to promote and accelerate protein folding. The sequence is that of Chaperonin GroEL from Mycolicibacterium vaccae (Mycobacterium vaccae).